The following is a 380-amino-acid chain: Cystathionine gamma-synthase (380 aa).

N6-(pyridoxal phosphate)lysine is present on Lys195.

It belongs to the trans-sulfuration enzymes family. In terms of assembly, homotetramer. Pyridoxal 5'-phosphate is required as a cofactor.

The protein localises to the cytoplasm. The catalysed reaction is O-succinyl-L-homoserine + L-cysteine = L,L-cystathionine + succinate + H(+). In terms of biological role, catalyzes the formation of L-cystathionine from O-succinyl-L-homoserine (OSHS) and L-cysteine, via a gamma-replacement reaction. In the absence of thiol, catalyzes gamma-elimination to form 2-oxobutanoate, succinate and ammonia. The protein is Cystathionine gamma-synthase (metB) of Helicobacter pylori (strain ATCC 700392 / 26695) (Campylobacter pylori).